Reading from the N-terminus, the 227-residue chain is Ribose-5-phosphate isomerase A (227 aa).

Substrate contacts are provided by residues 28–31, 84–87, and 97–100; these read TGST, DGAD, and KGGG. Glutamate 106 serves as the catalytic Proton acceptor. Substrate is bound at residue lysine 124.

This sequence belongs to the ribose 5-phosphate isomerase family. As to quaternary structure, homodimer.

The enzyme catalyses aldehydo-D-ribose 5-phosphate = D-ribulose 5-phosphate. It participates in carbohydrate degradation; pentose phosphate pathway; D-ribose 5-phosphate from D-ribulose 5-phosphate (non-oxidative stage): step 1/1. Its function is as follows. Catalyzes the reversible conversion of ribose-5-phosphate to ribulose 5-phosphate. This chain is Ribose-5-phosphate isomerase A, found in Lactiplantibacillus plantarum (strain ATCC BAA-793 / NCIMB 8826 / WCFS1) (Lactobacillus plantarum).